A 212-amino-acid polypeptide reads, in one-letter code: Probable GTP-binding protein EngB (212 aa).

One can recognise an EngB-type G domain in the interval 27-211 (GPPEIAFAGR…QAAIVLAANG (185 aa)). Residues 35–42 (GRSNVGKS), 62–66 (GRTQE), 89–92 (DMPG), 156–159 (TKTD), and 190–192 (TSS) each bind GTP. 2 residues coordinate Mg(2+): serine 42 and threonine 64.

The protein belongs to the TRAFAC class TrmE-Era-EngA-EngB-Septin-like GTPase superfamily. EngB GTPase family. Mg(2+) serves as cofactor.

Functionally, necessary for normal cell division and for the maintenance of normal septation. This is Probable GTP-binding protein EngB from Mesorhizobium japonicum (strain LMG 29417 / CECT 9101 / MAFF 303099) (Mesorhizobium loti (strain MAFF 303099)).